The following is a 553-amino-acid chain: Arginine--tRNA ligase (553 aa).

The short motif at 130 to 140 is the 'HIGH' region element; sequence ANPTGDLHIGH.

The protein belongs to the class-I aminoacyl-tRNA synthetase family. Monomer.

It localises to the cytoplasm. The enzyme catalyses tRNA(Arg) + L-arginine + ATP = L-arginyl-tRNA(Arg) + AMP + diphosphate. This chain is Arginine--tRNA ligase, found in Staphylococcus epidermidis (strain ATCC 35984 / DSM 28319 / BCRC 17069 / CCUG 31568 / BM 3577 / RP62A).